The following is a 189-amino-acid chain: Chitin synthase 1 (189 aa).

This sequence belongs to the chitin synthase family.

The protein resides in the cell membrane. The catalysed reaction is [(1-&gt;4)-N-acetyl-beta-D-glucosaminyl](n) + UDP-N-acetyl-alpha-D-glucosamine = [(1-&gt;4)-N-acetyl-beta-D-glucosaminyl](n+1) + UDP + H(+). Polymerizes chitin, a structural polymer of the cell wall and septum, by transferring the sugar moiety of UDP-GlcNAc to the non-reducing end of the growing chitin polymer. The chain is Chitin synthase 1 (CHS1) from Schizophyllum commune (Split gill fungus).